The following is a 95-amino-acid chain: MSGKPPVYRLPPLPRLKVKKPIIRQEANKCLVLMSNLLQCWSSYGHMSPKCAGLVTELKSCTSESALGKRNNVQKSNINYHAARLYDRINGKPHD.

Residues 27-69 enclose the CHCH domain; that stretch reads ANKCLVLMSNLLQCWSSYGHMSPKCAGLVTELKSCTSESALGK. Short sequence motifs (cx9C motif) lie at residues 30 to 40 and 51 to 61; these read CLVLMSNLLQC and CAGLVTELKSC. Intrachain disulfides connect cysteine 30/cysteine 61 and cysteine 40/cysteine 51.

This sequence belongs to the mitochondrion-specific ribosomal protein mS37 family. Component of the mitochondrial small ribosomal subunit (mt-SSU). Mature yeast 74S mitochondrial ribosomes consist of a small (37S) and a large (54S) subunit. The 37S small subunit contains a 15S ribosomal RNA (15S mt-rRNA) and 34 different proteins. The 54S large subunit contains a 21S rRNA (21S mt-rRNA) and 46 different proteins.

The protein resides in the mitochondrion. The protein localises to the mitochondrion matrix. Its function is as follows. Component of the mitochondrial ribosome (mitoribosome), a dedicated translation machinery responsible for the synthesis of mitochondrial genome-encoded proteins, including at least some of the essential transmembrane subunits of the mitochondrial respiratory chain. The mitoribosomes are attached to the mitochondrial inner membrane and translation products are cotranslationally integrated into the membrane. The polypeptide is Small ribosomal subunit protein mS37 (MRP10) (Saccharomyces cerevisiae (strain ATCC 204508 / S288c) (Baker's yeast)).